We begin with the raw amino-acid sequence, 306 residues long: Lipoyl synthase (306 aa).

Cys-55, Cys-60, Cys-66, Cys-81, Cys-85, Cys-88, and Ser-294 together coordinate [4Fe-4S] cluster. The 217-residue stretch at 67 to 283 (WNHRTATFLL…RSYALARGFT (217 aa)) folds into the Radical SAM core domain.

Belongs to the radical SAM superfamily. Lipoyl synthase family. [4Fe-4S] cluster is required as a cofactor.

The protein localises to the cytoplasm. The catalysed reaction is [[Fe-S] cluster scaffold protein carrying a second [4Fe-4S](2+) cluster] + N(6)-octanoyl-L-lysyl-[protein] + 2 oxidized [2Fe-2S]-[ferredoxin] + 2 S-adenosyl-L-methionine + 4 H(+) = [[Fe-S] cluster scaffold protein] + N(6)-[(R)-dihydrolipoyl]-L-lysyl-[protein] + 4 Fe(3+) + 2 hydrogen sulfide + 2 5'-deoxyadenosine + 2 L-methionine + 2 reduced [2Fe-2S]-[ferredoxin]. Its pathway is protein modification; protein lipoylation via endogenous pathway; protein N(6)-(lipoyl)lysine from octanoyl-[acyl-carrier-protein]: step 2/2. Catalyzes the radical-mediated insertion of two sulfur atoms into the C-6 and C-8 positions of the octanoyl moiety bound to the lipoyl domains of lipoate-dependent enzymes, thereby converting the octanoylated domains into lipoylated derivatives. This is Lipoyl synthase from Chloroflexus aurantiacus (strain ATCC 29364 / DSM 637 / Y-400-fl).